A 118-amino-acid chain; its full sequence is Small ribosomal subunit protein uS13 (118 aa).

The disordered stretch occupies residues 94–118; it reads SLPLRGQRTKTNARTRKGPRKPIRK.

Belongs to the universal ribosomal protein uS13 family. Part of the 30S ribosomal subunit. Forms a loose heterodimer with protein S19. Forms two bridges to the 50S subunit in the 70S ribosome.

Located at the top of the head of the 30S subunit, it contacts several helices of the 16S rRNA. In the 70S ribosome it contacts the 23S rRNA (bridge B1a) and protein L5 of the 50S subunit (bridge B1b), connecting the 2 subunits; these bridges are implicated in subunit movement. Contacts the tRNAs in the A and P-sites. The sequence is that of Small ribosomal subunit protein uS13 from Shewanella baltica (strain OS223).